Consider the following 246-residue polypeptide: 5'-nucleotidase SurE (246 aa).

D8, D9, S39, and N91 together coordinate a divalent metal cation.

The protein belongs to the SurE nucleotidase family. It depends on a divalent metal cation as a cofactor.

Its subcellular location is the cytoplasm. It carries out the reaction a ribonucleoside 5'-phosphate + H2O = a ribonucleoside + phosphate. In terms of biological role, nucleotidase that shows phosphatase activity on nucleoside 5'-monophosphates. This is 5'-nucleotidase SurE from Actinobacillus succinogenes (strain ATCC 55618 / DSM 22257 / CCUG 43843 / 130Z).